We begin with the raw amino-acid sequence, 375 residues long: Succinyl-diaminopimelate desuccinylase (375 aa).

A Zn(2+)-binding site is contributed by histidine 66. The active site involves aspartate 68. Aspartate 99 is a binding site for Zn(2+). The active-site Proton acceptor is the glutamate 133. Glutamate 134, glutamate 162, and histidine 348 together coordinate Zn(2+).

Belongs to the peptidase M20A family. DapE subfamily. As to quaternary structure, homodimer. Requires Zn(2+) as cofactor. It depends on Co(2+) as a cofactor.

It carries out the reaction N-succinyl-(2S,6S)-2,6-diaminopimelate + H2O = (2S,6S)-2,6-diaminopimelate + succinate. It participates in amino-acid biosynthesis; L-lysine biosynthesis via DAP pathway; LL-2,6-diaminopimelate from (S)-tetrahydrodipicolinate (succinylase route): step 3/3. Functionally, catalyzes the hydrolysis of N-succinyl-L,L-diaminopimelic acid (SDAP), forming succinate and LL-2,6-diaminopimelate (DAP), an intermediate involved in the bacterial biosynthesis of lysine and meso-diaminopimelic acid, an essential component of bacterial cell walls. The polypeptide is Succinyl-diaminopimelate desuccinylase (Klebsiella pneumoniae subsp. pneumoniae (strain ATCC 700721 / MGH 78578)).